The sequence spans 397 residues: 3-hydroxybenzoate 6-hydroxylase (397 aa).

The protein belongs to the 3-hydroxybenzoate 6-hydroxylase family. As to quaternary structure, monomer. It depends on FAD as a cofactor.

The catalysed reaction is 3-hydroxybenzoate + NADH + O2 + H(+) = 2,5-dihydroxybenzoate + NAD(+) + H2O. Its activity is regulated as follows. Inhibited by copper, mercury and iron ions. Its function is as follows. Catalyzes the NAD- or NADP-dependent conversion of 3-hydroxybenzoate to gentisate. NAD and NADP function equally well. The chain is 3-hydroxybenzoate 6-hydroxylase (mhbM) from Klebsiella oxytoca.